Reading from the N-terminus, the 224-residue chain is Thiamine-phosphate synthase (224 aa).

4-amino-2-methyl-5-(diphosphooxymethyl)pyrimidine contacts are provided by residues 44–48 and Asn-79; that span reads QFREK. Mg(2+) contacts are provided by Asp-80 and Asp-99. Ser-117 is a 4-amino-2-methyl-5-(diphosphooxymethyl)pyrimidine binding site. 143–145 is a 2-[(2R,5Z)-2-carboxy-4-methylthiazol-5(2H)-ylidene]ethyl phosphate binding site; that stretch reads TET. Lys-146 provides a ligand contact to 4-amino-2-methyl-5-(diphosphooxymethyl)pyrimidine. Residues Gly-175 and 195–196 each bind 2-[(2R,5Z)-2-carboxy-4-methylthiazol-5(2H)-ylidene]ethyl phosphate; that span reads IS.

It belongs to the thiamine-phosphate synthase family. It depends on Mg(2+) as a cofactor.

It catalyses the reaction 2-[(2R,5Z)-2-carboxy-4-methylthiazol-5(2H)-ylidene]ethyl phosphate + 4-amino-2-methyl-5-(diphosphooxymethyl)pyrimidine + 2 H(+) = thiamine phosphate + CO2 + diphosphate. The enzyme catalyses 2-(2-carboxy-4-methylthiazol-5-yl)ethyl phosphate + 4-amino-2-methyl-5-(diphosphooxymethyl)pyrimidine + 2 H(+) = thiamine phosphate + CO2 + diphosphate. It carries out the reaction 4-methyl-5-(2-phosphooxyethyl)-thiazole + 4-amino-2-methyl-5-(diphosphooxymethyl)pyrimidine + H(+) = thiamine phosphate + diphosphate. It participates in cofactor biosynthesis; thiamine diphosphate biosynthesis; thiamine phosphate from 4-amino-2-methyl-5-diphosphomethylpyrimidine and 4-methyl-5-(2-phosphoethyl)-thiazole: step 1/1. In terms of biological role, condenses 4-methyl-5-(beta-hydroxyethyl)thiazole monophosphate (THZ-P) and 2-methyl-4-amino-5-hydroxymethyl pyrimidine pyrophosphate (HMP-PP) to form thiamine monophosphate (TMP). The protein is Thiamine-phosphate synthase of Bacillus licheniformis (strain ATCC 14580 / DSM 13 / JCM 2505 / CCUG 7422 / NBRC 12200 / NCIMB 9375 / NCTC 10341 / NRRL NRS-1264 / Gibson 46).